The chain runs to 384 residues: DNA dC-&gt;dU-editing enzyme APOBEC-3G (384 aa).

Residues 1-60 (MKPHFRNTVERMYRDTFSYNFYNRPILSRRNTVWLCYEVKTKGPSRPPLDAKIFRGQVYS) form an essential for cytoplasmic localization region. The region spanning 29–138 (RRNTVWLCYE…PDYQEALRSL (110 aa)) is the CMP/dCMP-type deaminase 1 domain. Threonine 32 carries the post-translational modification Phosphothreonine; by PKA. (Microbial infection) Glycyl lysine isopeptide (Lys-Gly) (interchain with G-Cter in ubiquitin) cross-links involve residues lysine 42, lysine 52, and lysine 63. Residues histidine 65, cysteine 97, and cysteine 100 each contribute to the Zn(2+) site. (Microbial infection) Glycyl lysine isopeptide (Lys-Gly) (interchain with G-Cter in ubiquitin) cross-links involve residues lysine 150 and lysine 163. Residues 209-336 (EPWVRGRHET…TLAEAGAKIS (128 aa)) are necessary for homooligomerization. Residues 213–215 (RGR) are interaction with DNA. One can recognise a CMP/dCMP-type deaminase 2 domain in the interval 214–328 (GRHETYLCYE…GRCQEGLRTL (115 aa)). Threonine 218 is subject to Phosphothreonine; by PKA and CAMK2. Residue lysine 249 forms a (Microbial infection) Glycyl lysine isopeptide (Lys-Gly) (interchain with G-Cter in ubiquitin) linkage. Histidine 257 contacts Zn(2+). The active-site Proton donor is the glutamate 259. Lysine 270 participates in a covalent cross-link: (Microbial infection) Glycyl lysine isopeptide (Lys-Gly) (interchain with G-Cter in ubiquitin). Zn(2+)-binding residues include cysteine 288 and cysteine 291. (Microbial infection) Glycyl lysine isopeptide (Lys-Gly) (interchain with G-Cter in ubiquitin) cross-links involve residues lysine 297, lysine 301, and lysine 303. The interval 313–320 (RIYDDQGR) is interaction with DNA. Residue lysine 334 forms a (Microbial infection) Glycyl lysine isopeptide (Lys-Gly) (interchain with G-Cter in ubiquitin) linkage.

The protein belongs to the cytidine and deoxycytidylate deaminase family. In terms of assembly, homodimer. Homooligomer. Can bind RNA to form ribonucleoprotein complexes of high-molecular-mass (HMM) or low-molecular-mass (LMM). HMM is inactive and heterogeneous in protein composition because of binding nonselectively to cellular RNAs, which in turn are associated with variety of cellular proteins. The LMM form which is enzymatically active has few or no RNAs associated. Its ability to form homooligomer is distinct from its ability to assemble into HMM. Interacts with APOBEC3B, APOBEC3F, MOV10, AGO2, EIF4E, EIF4ENIF1, DCP2 and DDX6 in an RNA-dependent manner. Interacts with AGO1, AGO3 and PKA/PRKACA. As to quaternary structure, (Microbial infection) Interacts with HIV-1 Vif; promoting its ubiquitination by a cullin-5-RING E3 ubiquitin-protein ligase complex (ECS complex) hijacked by the HIV-1 Vif. (Microbial infection) Interacts with HIV-1 reverse transcriptase/ribonuclease H. In terms of assembly, (Microbial infection) Interacts with hepatitis B virus capsid protein. It depends on Zn(2+) as a cofactor. Post-translationally, (Microbial infection) Following infection by HIV-1, ubiquitinated by a cullin-5-RING E3 ubiquitin-protein ligase complex (ECS complex) hijacked by the HIV-1 Vif protein, leading to its degradation. Deubiquitinated by USP49; leading to stabilization. Phosphorylation at Thr-32 reduces its binding to HIV-1 Vif and subsequent ubiquitination and degradation thus promoting its antiviral activity. As to expression, expressed in spleen, testes, ovary and peripheral blood leukocytes and CD4+ lymphocytes. Also expressed in non-permissive peripheral blood mononuclear cells, and several tumor cell lines; no expression detected in permissive lymphoid and non-lymphoid cell lines. Exists only in the LMM form in peripheral blood-derived resting CD4 T-cells and monocytes, both of which are refractory to HIV-1 infection. LMM is converted to a HMM complex when resting CD4 T-cells are activated or when monocytes are induced to differentiate into macrophages. This change correlates with increased susceptibility of these cells to HIV-1 infection.

Its subcellular location is the cytoplasm. The protein localises to the nucleus. The protein resides in the P-body. The catalysed reaction is a 2'-deoxycytidine in single-stranded DNA + H2O + H(+) = a 2'-deoxyuridine in single-stranded DNA + NH4(+). Its activity is regulated as follows. (Microbial infection) Antiviral activity is neutralized by the HIV-1 virion infectivity factor (Vif), that prevents its incorporation into progeny virions by both inhibiting its translation and/or by inducing its ubiquitination and subsequent degradation by the 26S proteasome. Can also be neutralized by simian immunodeficiency virus sooty mangabey monkey virus (SIV-sm) and chimpanzee immunodeficiency virus (SIV-cpz) Vif. DNA deaminase (cytidine deaminase) which acts as an inhibitor of retrovirus replication and retrotransposon mobility via deaminase-dependent and -independent mechanisms. Exhibits potent antiviral activity against Vif-deficient HIV-1. After the penetration of retroviral nucleocapsids into target cells of infection and the initiation of reverse transcription, it can induce the conversion of cytosine to uracil in the minus-sense single-strand viral DNA, leading to G-to-A hypermutations in the subsequent plus-strand viral DNA. The resultant detrimental levels of mutations in the proviral genome, along with a deamination-independent mechanism that works prior to the proviral integration, together exert efficient antiretroviral effects in infected target cells. Selectively targets single-stranded DNA and does not deaminate double-stranded DNA or single- or double-stranded RNA. Exhibits antiviral activity also against simian immunodeficiency viruses (SIVs), hepatitis B virus (HBV), equine infectious anemia virus (EIAV), xenotropic MuLV-related virus (XMRV) and simian foamy virus (SFV). May inhibit the mobility of LTR and non-LTR retrotransposons. The sequence is that of DNA dC-&gt;dU-editing enzyme APOBEC-3G from Homo sapiens (Human).